The following is a 538-amino-acid chain: Beta-1,4-mannosyl-glycoprotein 4-beta-N-acetylglucosaminyltransferase (538 aa).

The Cytoplasmic portion of the chain corresponds to M1–K7. A helical; Signal-anchor for type II membrane protein membrane pass occupies residues L8 to L23. Residues H24–G538 lie on the Lumenal side of the membrane. Residues P120 to E161 are disordered. 3 N-linked (GlcNAc...) asparagine glycosylation sites follow: N245, N263, and N401. The tract at residues R507–G538 is disordered.

Belongs to the glycosyltransferase 17 family. In terms of assembly, interacts with MGAT4D. Highly expressed in brain and kidney and to a much lesser extent in stomach, heart, intestine, uterus, testis, ovary and lung. Not present in spleen, liver and muscle. In brain, expressed in neurons of hippocampus.

Its subcellular location is the golgi apparatus membrane. It catalyses the reaction N(4)-{beta-D-GlcNAc-(1-&gt;2)-alpha-D-Man-(1-&gt;3)-[beta-D-GlcNAc-(1-&gt;2)-alpha-D-Man-(1-&gt;6)]-beta-D-Man-(1-&gt;4)-beta-D-GlcNAc-(1-&gt;4)-beta-D-GlcNAc}-L-asparaginyl-[protein] + UDP-N-acetyl-alpha-D-glucosamine = N(4)-{beta-D-GlcNAc-(1-&gt;2)-alpha-D-Man-(1-&gt;3)-[beta-D-GlcNAc-(1-&gt;4)]-[beta-D-GlcNAc-(1-&gt;2)-alpha-D-Man-(1-&gt;6)]-beta-D-Man-(1-&gt;4)-beta-D-GlcNAc-(1-&gt;4)-beta-D-GlcNAc}-L-asparaginyl-[protein] + UDP + H(+). Its pathway is protein modification; protein glycosylation. In terms of biological role, it is involved in the regulation of the biosynthesis and biological function of glycoprotein oligosaccharides. Catalyzes the addition of N-acetylglucosamine in beta 1-4 linkage to the beta-linked mannose of the trimannosyl core of N-linked sugar chains, called bisecting N-acetylglucosamine (GlcNAc). It is one of the most important enzymes involved in the regulation of the biosynthesis of glycoprotein oligosaccharides. The addition of this bisecting GlcNAc residue alters not only the composition, but also the conformation of the N-glycan. The introduction of the bisecting GlcNAc residue results in the suppression of further processing and elongation of N-glycans, precluding the formation of beta-1,6 GlcNAc branching, catalyzed by MGAT5 since it is unable to use the bisected oligosaccharide as a substrate. Addition of bisecting N-acetylglucosamine to CDH1/E-cadherin modulates CDH1 cell membrane location. Inhibits NeuAc-alpha-2,3-Gal-beta-1,4-GlcNAc- formation which modulates sialylation levels and plays a role in cell migration regulation. In brain, addition of bisecting N-acetylglucosamine to BACE1 blocks its lysosomal targeting in response to oxidative stress and further degradation which increases its location to early endosome and the APP cleavage. The sequence is that of Beta-1,4-mannosyl-glycoprotein 4-beta-N-acetylglucosaminyltransferase from Mus musculus (Mouse).